We begin with the raw amino-acid sequence, 340 residues long: MERRRRPTLEMVAALAGVGRGTVSRVINGSDQVSPATREAVKRAIKELGYVPNRAARTLVTRRTDTVALVVSENNQKLFAEPFYAGIVLGVGVALSERGFQFVLATGRSGIEHERLGGYLAGQHVDGVLLLSLHRDDPLPQMLDEAGVPYVYGGRPLGVPEEQVSYVDIDNIGGGRQATQRLIETGHRRIATIAGPQDMVAGVERLQGYREALLAAGMEYDETLVSYGDFTYDSGVAAMRELLDRAPDVDAVFAASDLMGLAALRVLRASGRRVPEDVAVVGYDDSTVAEHAEPPMTSVNQPTELMGREMARLLVDRITGETTEPVRLVLETHLMVRESG.

The 61-residue stretch at 1–61 (MERRRRPTLE…PNRAARTLVT (61 aa)) folds into the HTH lacI-type domain. Residues 9 to 28 (LEMVAALAGVGRGTVSRVIN) constitute a DNA-binding region (H-T-H motif).

It is found in the cytoplasm. With respect to regulation, activity is controlled by cytoplasmic cellobiose levels. Binding of CelR to the celE promoter is inhibited specifically by low concentrations of cellobiose, the major end product of cellulases. Activity may also be regulated through post-translational modification. In terms of biological role, transcriptional regulator that regulates the expression of all six cellulases, encoded by the cel genes (designated celA through celF). Acts as a repressor. Specifically binds to a 14-bp inverted repeat site, which is present in the upstream region of the cellulase genes. The chain is HTH-type transcriptional regulator CelR from Thermobifida fusca (Thermomonospora fusca).